The following is a 237-amino-acid chain: Ribonuclease PH (237 aa).

Phosphate-binding positions include arginine 86 and 124-126; that span reads GTR.

The protein belongs to the RNase PH family. Homohexameric ring arranged as a trimer of dimers.

It carries out the reaction tRNA(n+1) + phosphate = tRNA(n) + a ribonucleoside 5'-diphosphate. Its function is as follows. Phosphorolytic 3'-5' exoribonuclease that plays an important role in tRNA 3'-end maturation. Removes nucleotide residues following the 3'-CCA terminus of tRNAs; can also add nucleotides to the ends of RNA molecules by using nucleoside diphosphates as substrates, but this may not be physiologically important. Probably plays a role in initiation of 16S rRNA degradation (leading to ribosome degradation) during starvation. The sequence is that of Ribonuclease PH from Bradyrhizobium sp. (strain ORS 278).